The primary structure comprises 150 residues: SsrA-binding protein (150 aa).

Belongs to the SmpB family.

The protein resides in the cytoplasm. Required for rescue of stalled ribosomes mediated by trans-translation. Binds to transfer-messenger RNA (tmRNA), required for stable association of tmRNA with ribosomes. tmRNA and SmpB together mimic tRNA shape, replacing the anticodon stem-loop with SmpB. tmRNA is encoded by the ssrA gene; the 2 termini fold to resemble tRNA(Ala) and it encodes a 'tag peptide', a short internal open reading frame. During trans-translation Ala-aminoacylated tmRNA acts like a tRNA, entering the A-site of stalled ribosomes, displacing the stalled mRNA. The ribosome then switches to translate the ORF on the tmRNA; the nascent peptide is terminated with the 'tag peptide' encoded by the tmRNA and targeted for degradation. The ribosome is freed to recommence translation, which seems to be the essential function of trans-translation. In Coprothermobacter proteolyticus (strain ATCC 35245 / DSM 5265 / OCM 4 / BT), this protein is SsrA-binding protein.